The sequence spans 141 residues: Lutropin subunit beta (141 aa).

An N-terminal signal peptide occupies residues 1 to 20 (MEMLQGLLLWLLLNVGGVWA). 6 cysteine pairs are disulfide-bonded: Cys29/Cys77, Cys43/Cys92, Cys46/Cys130, Cys54/Cys108, Cys58/Cys110, and Cys113/Cys120. N-linked (GlcNAc...) asparagine glycosylation occurs at Asn33.

This sequence belongs to the glycoprotein hormones subunit beta family. In terms of assembly, heterodimer of a common alpha chain and a unique beta chain which confers biological specificity to thyrotropin, lutropin, follitropin and gonadotropin.

It localises to the secreted. Functionally, promotes spermatogenesis and ovulation by stimulating the testes and ovaries to synthesize steroids. In Ailurus fulgens (Himalayan red panda), this protein is Lutropin subunit beta (LHB).